Consider the following 226-residue polypeptide: PKHD-type hydroxylase BP3529 (226 aa).

In terms of domain architecture, Fe2OG dioxygenase spans 78–178; that stretch reads KIFPPLFNRY…RISAFFWLQS (101 aa). Fe cation is bound by residues His96, Asp98, and His159. Arg169 is a binding site for 2-oxoglutarate.

Requires Fe(2+) as cofactor. L-ascorbate is required as a cofactor.

The chain is PKHD-type hydroxylase BP3529 from Bordetella pertussis (strain Tohama I / ATCC BAA-589 / NCTC 13251).